The primary structure comprises 402 residues: 1-deoxy-D-xylulose 5-phosphate reductoisomerase (402 aa).

Positions 21, 22, 23, 24, 47, 50, and 127 each coordinate NADPH. Lysine 128 lines the 1-deoxy-D-xylulose 5-phosphate pocket. Glutamate 129 provides a ligand contact to NADPH. Position 151 (aspartate 151) interacts with Mn(2+). 4 residues coordinate 1-deoxy-D-xylulose 5-phosphate: serine 152, glutamate 153, serine 177, and histidine 200. Residue glutamate 153 coordinates Mn(2+). Glycine 206 lines the NADPH pocket. Residues serine 213, asparagine 218, lysine 219, and glutamate 222 each coordinate 1-deoxy-D-xylulose 5-phosphate. Glutamate 222 contacts Mn(2+).

The protein belongs to the DXR family. Mg(2+) is required as a cofactor. Requires Mn(2+) as cofactor.

The enzyme catalyses 2-C-methyl-D-erythritol 4-phosphate + NADP(+) = 1-deoxy-D-xylulose 5-phosphate + NADPH + H(+). It functions in the pathway isoprenoid biosynthesis; isopentenyl diphosphate biosynthesis via DXP pathway; isopentenyl diphosphate from 1-deoxy-D-xylulose 5-phosphate: step 1/6. In terms of biological role, catalyzes the NADPH-dependent rearrangement and reduction of 1-deoxy-D-xylulose-5-phosphate (DXP) to 2-C-methyl-D-erythritol 4-phosphate (MEP). The sequence is that of 1-deoxy-D-xylulose 5-phosphate reductoisomerase from Mycobacterium marinum (strain ATCC BAA-535 / M).